We begin with the raw amino-acid sequence, 406 residues long: Corticosteroid-binding globulin (406 aa).

A signal peptide spans 1 to 22 (MLLTLYACLLWLSTSGLWTSQA). Residues Asn-95, Asn-119, and Asn-223 are each glycosylated (N-linked (GlcNAc...) asparagine). Gln-253 is a binding site for cortisol. Residue Asn-259 is glycosylated (N-linked (GlcNAc...) asparagine). Residues Gln-285 and Trp-394 each contribute to the cortisol site.

The protein belongs to the serpin family.

Its subcellular location is the secreted. Functionally, major transport protein for glucocorticoids and progestins in the blood of almost all vertebrate species. This Sus scrofa (Pig) protein is Corticosteroid-binding globulin (Serpina6).